Here is a 177-residue protein sequence, read N- to C-terminus: Shikimate kinase (177 aa).

An ATP-binding site is contributed by 14–19; that stretch reads GSGKST. Position 18 (Ser18) interacts with Mg(2+). Substrate contacts are provided by Asp36, Arg60, and Gly82. Residue Arg120 coordinates ATP. Substrate is bound at residue Arg139.

It belongs to the shikimate kinase family. As to quaternary structure, monomer. The cofactor is Mg(2+).

Its subcellular location is the cytoplasm. The enzyme catalyses shikimate + ATP = 3-phosphoshikimate + ADP + H(+). The protein operates within metabolic intermediate biosynthesis; chorismate biosynthesis; chorismate from D-erythrose 4-phosphate and phosphoenolpyruvate: step 5/7. In terms of biological role, catalyzes the specific phosphorylation of the 3-hydroxyl group of shikimic acid using ATP as a cosubstrate. This chain is Shikimate kinase, found in Gloeobacter violaceus (strain ATCC 29082 / PCC 7421).